The following is a 100-amino-acid chain: NADH-quinone oxidoreductase subunit K (100 aa).

3 consecutive transmembrane segments (helical) span residues 4-24, 28-48, and 60-80; these read LQHGLILAAVLFVLGFTCLVL, LLFMLIGLEIMINSAALAFVV, and IMYILAISLAAAEASIGLALL.

This sequence belongs to the complex I subunit 4L family. In terms of assembly, NDH-1 is composed of 13 different subunits. Subunits NuoA, H, J, K, L, M, N constitute the membrane sector of the complex.

It is found in the cell inner membrane. The catalysed reaction is a quinone + NADH + 5 H(+)(in) = a quinol + NAD(+) + 4 H(+)(out). Its function is as follows. NDH-1 shuttles electrons from NADH, via FMN and iron-sulfur (Fe-S) centers, to quinones in the respiratory chain. The immediate electron acceptor for the enzyme in this species is believed to be ubiquinone. Couples the redox reaction to proton translocation (for every two electrons transferred, four hydrogen ions are translocated across the cytoplasmic membrane), and thus conserves the redox energy in a proton gradient. This Proteus mirabilis (strain HI4320) protein is NADH-quinone oxidoreductase subunit K.